The primary structure comprises 296 residues: 4-diphosphocytidyl-2-C-methyl-D-erythritol kinase (296 aa).

Residue Lys13 is part of the active site. 98 to 108 (PVAAGIGGGSA) serves as a coordination point for ATP. Asp140 is a catalytic residue.

This sequence belongs to the GHMP kinase family. IspE subfamily.

The catalysed reaction is 4-CDP-2-C-methyl-D-erythritol + ATP = 4-CDP-2-C-methyl-D-erythritol 2-phosphate + ADP + H(+). Its pathway is isoprenoid biosynthesis; isopentenyl diphosphate biosynthesis via DXP pathway; isopentenyl diphosphate from 1-deoxy-D-xylulose 5-phosphate: step 3/6. Its function is as follows. Catalyzes the phosphorylation of the position 2 hydroxy group of 4-diphosphocytidyl-2C-methyl-D-erythritol. The sequence is that of 4-diphosphocytidyl-2-C-methyl-D-erythritol kinase from Rhodopseudomonas palustris (strain HaA2).